We begin with the raw amino-acid sequence, 146 residues long: Large ribosomal subunit protein bL9 (146 aa).

It belongs to the bacterial ribosomal protein bL9 family.

In terms of biological role, binds to the 23S rRNA. This chain is Large ribosomal subunit protein bL9, found in Nautilia profundicola (strain ATCC BAA-1463 / DSM 18972 / AmH).